The chain runs to 570 residues: MDPSSDYHFLNQILWRRVKLTLVSGIFEGVLQHVDPNKIVVLKNVRNAESGRSVPGVKVFFGHEILNVELMDEAEGASGEKASAVSINTERAGMEKVKNEDVNVCEPASPAPEVPTSSLLSDLKYCPSEEEEVTYTVIDQFQQKFGAAMLHIKKQSVLSVAAEGANVCRHGKLCWLQVATNSRVYLFDIFLLGSRAFNNGLQMILEDKRILKVIHDCRWLSDCLSHQYGIMLNNVFDTQVADVLQFSMETGGFLPNCISTLQESLIRHLKVAPRYLFFLEERQKRIQENPEIWLTRPLPPSLLKILALETTYLLPLRLVLLDEVMSDLTTLVDGYLNTYREGSADRLAGTEPACMELPAELLQLQDFQKQRRERAVKEYRVNARGLLIRTPLHPKEPTACTAGKEERVQGFLFYKTDGGDQVPRFLCPKSHEDEKFLDKESKQTTAKSQIVPPRKEGEAHKDSKNKPGCWESAGPEDPRAQKAHALPPTWASQSQFSLKEEIEQLTVVGNKGALTSPKEGALVSPSLLQETWEAPTDTFHLPEKAEVSTLPPCPALEKTDSWISPSLNLF.

Residues 135–307 (YTVIDQFQQK…LPPSLLKILA (173 aa)) form the 3'-5' exonuclease domain. Basic and acidic residues-rich tracts occupy residues 433-442 (DEKFLDKESK) and 453-465 (PRKEGEAHKDSKN). The segment at 433-485 (DEKFLDKESKQTTAKSQIVPPRKEGEAHKDSKNKPGCWESAGPEDPRAQKAHA) is disordered.

It belongs to the EXD1 family. In terms of assembly, homodimer. Component of the PET complex, at least composed of EXD1, PIWIL2, TDRD12 and piRNAs.

Its subcellular location is the cytoplasm. Its function is as follows. RNA-binding component of the PET complex, a multiprotein complex required for the processing of piRNAs during spermatogenesis. The piRNA metabolic process mediates the repression of transposable elements during meiosis by forming complexes composed of piRNAs and Piwi proteins and governs the methylation and subsequent repression of transposable elements, preventing their mobilization, which is essential for the germline integrity. The PET complex is required during the secondary piRNAs metabolic process for the PIWIL2 slicing-triggered loading of PIWIL4 piRNAs. In the PET complex, EXD1 probably acts as an RNA adapter. EXD1 is an inactive exonuclease. In Mus musculus (Mouse), this protein is piRNA biogenesis protein EXD1 (Exd1).